Reading from the N-terminus, the 431-residue chain is Serine--tRNA ligase (431 aa).

Residue 238–240 (TAE) coordinates L-serine. 269-271 (RSE) is a binding site for ATP. Residue E292 participates in L-serine binding. 356-359 (EISS) is a binding site for ATP. An L-serine-binding site is contributed by S391.

The protein belongs to the class-II aminoacyl-tRNA synthetase family. Type-1 seryl-tRNA synthetase subfamily. As to quaternary structure, homodimer. The tRNA molecule binds across the dimer.

Its subcellular location is the cytoplasm. It catalyses the reaction tRNA(Ser) + L-serine + ATP = L-seryl-tRNA(Ser) + AMP + diphosphate + H(+). It carries out the reaction tRNA(Sec) + L-serine + ATP = L-seryl-tRNA(Sec) + AMP + diphosphate + H(+). Its pathway is aminoacyl-tRNA biosynthesis; selenocysteinyl-tRNA(Sec) biosynthesis; L-seryl-tRNA(Sec) from L-serine and tRNA(Sec): step 1/1. Catalyzes the attachment of serine to tRNA(Ser). Is also able to aminoacylate tRNA(Sec) with serine, to form the misacylated tRNA L-seryl-tRNA(Sec), which will be further converted into selenocysteinyl-tRNA(Sec). This is Serine--tRNA ligase from Bdellovibrio bacteriovorus (strain ATCC 15356 / DSM 50701 / NCIMB 9529 / HD100).